Reading from the N-terminus, the 510-residue chain is Light-independent protochlorophyllide reductase subunit B (510 aa).

Residue D36 participates in [4Fe-4S] cluster binding. Catalysis depends on D297, which acts as the Proton donor. Substrate is bound at residue 432–433 (GM).

This sequence belongs to the ChlB/BchB/BchZ family. Protochlorophyllide reductase is composed of three subunits; ChlL, ChlN and ChlB. Forms a heterotetramer of two ChlB and two ChlN subunits. The cofactor is [4Fe-4S] cluster.

Its subcellular location is the plastid. It is found in the chloroplast. The enzyme catalyses chlorophyllide a + oxidized 2[4Fe-4S]-[ferredoxin] + 2 ADP + 2 phosphate = protochlorophyllide a + reduced 2[4Fe-4S]-[ferredoxin] + 2 ATP + 2 H2O. It functions in the pathway porphyrin-containing compound metabolism; chlorophyll biosynthesis (light-independent). Component of the dark-operative protochlorophyllide reductase (DPOR) that uses Mg-ATP and reduced ferredoxin to reduce ring D of protochlorophyllide (Pchlide) to form chlorophyllide a (Chlide). This reaction is light-independent. The NB-protein (ChlN-ChlB) is the catalytic component of the complex. The protein is Light-independent protochlorophyllide reductase subunit B of Pinus thunbergii (Japanese black pine).